Consider the following 461-residue polypeptide: Serine carboxypeptidase-like 45 (461 aa).

Residues 1 to 24 form the signal peptide; it reads MSPLQWLTISFALIIFHSLTVSSS. Disulfide bonds link Cys-86–Cys-340, Cys-243–Cys-261, and Cys-286–Cys-309. Asn-168 carries N-linked (GlcNAc...) asparagine glycosylation. Ser-177 is a catalytic residue. Asn-244 carries an N-linked (GlcNAc...) asparagine glycan. Active-site residues include Asp-377 and His-434.

This sequence belongs to the peptidase S10 family. In terms of tissue distribution, ubiquitous.

The protein localises to the secreted. Its function is as follows. Probable carboxypeptidase. This is Serine carboxypeptidase-like 45 (SCPL45) from Arabidopsis thaliana (Mouse-ear cress).